Consider the following 431-residue polypeptide: Glutamate-1-semialdehyde 2,1-aminomutase (431 aa).

K269 carries the post-translational modification N6-(pyridoxal phosphate)lysine.

The protein belongs to the class-III pyridoxal-phosphate-dependent aminotransferase family. HemL subfamily. Homodimer. Requires pyridoxal 5'-phosphate as cofactor.

It localises to the cytoplasm. The enzyme catalyses (S)-4-amino-5-oxopentanoate = 5-aminolevulinate. It participates in porphyrin-containing compound metabolism; protoporphyrin-IX biosynthesis; 5-aminolevulinate from L-glutamyl-tRNA(Glu): step 2/2. Its pathway is porphyrin-containing compound metabolism; chlorophyll biosynthesis. The protein is Glutamate-1-semialdehyde 2,1-aminomutase of Chlorobium phaeobacteroides (strain DSM 266 / SMG 266 / 2430).